A 113-amino-acid polypeptide reads, in one-letter code: U11-theraphotoxin-Hhn1f (113 aa).

Residues 1–21 (MNTVRVTFLLVFVLAVSLGQA) form the signal peptide. Residues 22–74 (DKDENRMEMQEKTEQGKSYLDFAENLLLQKLEELEAKLLEEDSKESRNSRQKR) constitute a propeptide that is removed on maturation. The segment at 61–82 (EEDSKESRNSRQKRCIGEGVPC) is disordered. Intrachain disulfides connect Cys-75-Cys-90, Cys-82-Cys-95, and Cys-89-Cys-110.

This sequence belongs to the neurotoxin 14 (magi-1) family. 01 (HNTX-16) subfamily. In terms of tissue distribution, expressed by the venom gland.

Its subcellular location is the secreted. Its function is as follows. Probable ion channel inhibitor. This Cyriopagopus hainanus (Chinese bird spider) protein is U11-theraphotoxin-Hhn1f.